The sequence spans 74 residues: MARVNSLKCALCFIVLILFVQLNCIPETRVMAVELSRVFLQTSSTDCGEPCVYIPCTITALLGCSCLNKVCVRP.

The signal sequence occupies residues Met-1 to Cys-24. The propeptide occupies Ile-25 to Ser-43. Cystine bridges form between Cys-47/Cys-64, Cys-51/Cys-66, and Cys-56/Cys-71.

Contains 3 disulfide bonds. As to expression, expressed in midvein, lamina and periphery of leaves (at protein level).

Probably participates in a plant defense mechanism. The polypeptide is Acyclotide phyb-K (Petunia hybrida (Petunia)).